We begin with the raw amino-acid sequence, 1168 residues long: Carbamoyl phosphate synthase arginine-specific large chain, mitochondrial (1168 aa).

The transit peptide at 1 to 51 directs the protein to the mitochondrion; sequence MLSTVHKAGRAPALLRHGRRVPVQASQLRALTSGAQNTSIFQTQANAAQRL. A carboxyphosphate synthetic domain region spans residues 86–483; that stretch reads RDHVDVKKVL…SFQKAIRQVD (398 aa). ATP contacts are provided by residues arginine 213, 243 to 298, arginine 253, glycine 259, glycine 260, lysine 290, leucine 292, glutamate 297, glycine 323, isoleucine 324, histidine 325, glutamine 366, and glutamate 380; that span reads ANKI…WKEV. The ATP-grasp 1 domain maps to 217-409; sequence AKALEEINIP…LAYTAAKIGL (193 aa). Residues glutamine 366, glutamate 380, and asparagine 382 each coordinate Mg(2+). Positions 366, 380, and 382 each coordinate Mn(2+). Positions 484-628 are oligomerization domain; that stretch reads PRFVGFQGDK…YTTYNASSHD (145 aa). The tract at residues 629-1017 is carbamoyl phosphate synthetic domain; sequence VTFEDKGTVI…AYWASLQSAM (389 aa). The ATP-grasp 2 domain maps to 754–951; the sequence is SEILDSIGVD…FIDAATKALV (198 aa). ATP-binding positions include 780 to 837, arginine 790, lysine 829, isoleucine 831, glutamate 836, glycine 861, valine 862, histidine 863, serine 864, glutamine 904, and glutamate 922; that span reads AEEV…AQEI. Glutamine 904, glutamate 922, and asparagine 924 together coordinate Mg(2+). Glutamine 904, glutamate 922, and asparagine 924 together coordinate Mn(2+). The allosteric domain stretch occupies residues 1018-1152; the sequence is NFRVPEPGEG…AEKLPRPEGI (135 aa). The MGS-like domain occupies 1019 to 1168; it reads FRVPEPGEGL…WSEFIGGKPL (150 aa).

Belongs to the CarB family. As to quaternary structure, heterodimer composed of 2 chains; the small (or glutamine) chain promotes the hydrolysis of glutamine to ammonia, which is used by the large (or ammonia) chain to synthesize carbamoyl phosphate. Mg(2+) is required as a cofactor. Requires Mn(2+) as cofactor.

Its subcellular location is the mitochondrion matrix. It carries out the reaction hydrogencarbonate + L-glutamine + 2 ATP + H2O = carbamoyl phosphate + L-glutamate + 2 ADP + phosphate + 2 H(+). The enzyme catalyses hydrogencarbonate + NH4(+) + 2 ATP = carbamoyl phosphate + 2 ADP + phosphate + 2 H(+). Its pathway is amino-acid biosynthesis; L-arginine biosynthesis; carbamoyl phosphate from bicarbonate: step 1/1. Its function is as follows. Large subunit of the arginine-specific carbamoyl phosphate synthase (CPSase). CPSase catalyzes the formation of carbamoyl phosphate from the ammonia moiety of glutamine, hydrogencarbonate, and phosphate donated by ATP, the first step of the arginine biosynthetic pathway. The large subunit (synthetase) binds the substrates ammonia (free or transferred from glutamine from the small subunit), hydrogencarbonate and ATP and carries out an ATP-coupled ligase reaction, activating hydrogencarbonate by forming carboxy phosphate which reacts with ammonia to form carbamoyl phosphate. The sequence is that of Carbamoyl phosphate synthase arginine-specific large chain, mitochondrial (arg-3) from Neurospora crassa (strain ATCC 24698 / 74-OR23-1A / CBS 708.71 / DSM 1257 / FGSC 987).